A 421-amino-acid polypeptide reads, in one-letter code: UDP-N-acetylglucosamine 1-carboxyvinyltransferase 2 (421 aa).

Position 22–23 (22–23 (KN)) interacts with phosphoenolpyruvate. Arginine 94 is a binding site for UDP-N-acetyl-alpha-D-glucosamine. Cysteine 118 serves as the catalytic Proton donor. At cysteine 118 the chain carries 2-(S-cysteinyl)pyruvic acid O-phosphothioketal. Positions 308 and 330 each coordinate UDP-N-acetyl-alpha-D-glucosamine.

This sequence belongs to the EPSP synthase family. MurA subfamily.

It localises to the cytoplasm. The enzyme catalyses phosphoenolpyruvate + UDP-N-acetyl-alpha-D-glucosamine = UDP-N-acetyl-3-O-(1-carboxyvinyl)-alpha-D-glucosamine + phosphate. It functions in the pathway cell wall biogenesis; peptidoglycan biosynthesis. Its function is as follows. Cell wall formation. Adds enolpyruvyl to UDP-N-acetylglucosamine. This is UDP-N-acetylglucosamine 1-carboxyvinyltransferase 2 from Lactococcus lactis subsp. lactis (strain IL1403) (Streptococcus lactis).